The following is a 208-amino-acid chain: N-(5'-phosphoribosyl)anthranilate isomerase (208 aa).

Belongs to the TrpF family.

The catalysed reaction is N-(5-phospho-beta-D-ribosyl)anthranilate = 1-(2-carboxyphenylamino)-1-deoxy-D-ribulose 5-phosphate. It participates in amino-acid biosynthesis; L-tryptophan biosynthesis; L-tryptophan from chorismate: step 3/5. The protein is N-(5'-phosphoribosyl)anthranilate isomerase of Neisseria meningitidis serogroup A / serotype 4A (strain DSM 15465 / Z2491).